Consider the following 299-residue polypeptide: GTPase Era (299 aa).

In terms of domain architecture, Era-type G spans 5–172; the sequence is KSGFVSIIGR…IDVLKTYLPE (168 aa). Residues 13-20 are G1; it reads GRPNVGKS. 13-20 contributes to the GTP binding site; it reads GRPNVGKS. The segment at 39–43 is G2; that stretch reads QTTRN. The tract at residues 60–63 is G3; it reads DTPG. Residues 60-64 and 122-125 each bind GTP; these read DTPGI and NKID. The tract at residues 122-125 is G4; that stretch reads NKID. A G5 region spans residues 151–153; that stretch reads ISA. Positions 203 to 280 constitute a KH type-2 domain; it reads TSEEIPHAIG…YLELWVKVQK (78 aa).

The protein belongs to the TRAFAC class TrmE-Era-EngA-EngB-Septin-like GTPase superfamily. Era GTPase family. As to quaternary structure, monomer.

Its subcellular location is the cytoplasm. The protein resides in the cell membrane. Its function is as follows. An essential GTPase that binds both GDP and GTP, with rapid nucleotide exchange. Plays a role in 16S rRNA processing and 30S ribosomal subunit biogenesis and possibly also in cell cycle regulation and energy metabolism. This is GTPase Era from Staphylococcus haemolyticus (strain JCSC1435).